Reading from the N-terminus, the 985-residue chain is Disease resistance protein At4g27190 (985 aa).

Residues A24–E88 adopt a coiled-coil conformation. An NB-ARC domain is found at I167–G429. Residue G171–T178 participates in ATP binding. 6 LRR repeats span residues S502–F523, K526–Q547, T551–R572, S575–A597, K598–K620, and R621–R643.

It belongs to the disease resistance NB-LRR family.

In terms of biological role, disease resistance protein. The chain is Disease resistance protein At4g27190 from Arabidopsis thaliana (Mouse-ear cress).